Consider the following 1531-residue polypeptide: Probable outer membrane protein PmpD (1531 aa).

A signal peptide spans 1 to 20; it reads MSSEKDIKSTCSKFSLSVVA. Residues 1244–1531 enclose the Autotransporter domain; that stretch reads EFDYSTNVWG…EANTGLRLIF (288 aa).

The protein belongs to the PMP outer membrane protein family.

Its subcellular location is the secreted. It is found in the cell wall. It localises to the cell outer membrane. The sequence is that of Probable outer membrane protein PmpD (pmpD) from Chlamydia trachomatis serovar D (strain ATCC VR-885 / DSM 19411 / UW-3/Cx).